The following is a 396-amino-acid chain: B2 bradykinin receptor (396 aa).

Topologically, residues 1–65 (MDTRSSLCPK…EWWSWLNAIQ (65 aa)) are extracellular. N-linked (GlcNAc...) asparagine glycosylation is found at N33 and N44. The helical transmembrane segment at 66-89 (APFLWVLFLLAALENIFVLSVFCL) threads the bilayer. The Cytoplasmic segment spans residues 90 to 98 (HKTNCTVAE). A helical transmembrane segment spans residues 99–123 (IYLGNLAAADLILACGLPFWAITIA). Residues 124–136 (NNFDWLFGEVLCR) are Extracellular-facing. C135 and C216 are joined by a disulfide. A helical membrane pass occupies residues 137–158 (VVNTMIYMNLYSSICFLMLVSI). Residues 159 to 180 (DRYLALVKTMSMGRMRGVRWAK) are Cytoplasmic-facing. Y161 is modified (phosphotyrosine). The chain crosses the membrane as a helical span at residues 181–203 (LYSLVIWSCTLLLSSPMLVFRTM). Topologically, residues 204–226 (KDYREEGHNVTACVIVYPSRSWE) are extracellular. N212 carries an N-linked (GlcNAc...) asparagine glycan. Residues 227–253 (VFTNMLLNLVGFLLPLSIITFCTVRIM) traverse the membrane as a helical segment. At 254 to 272 (QVLRNNEMKKFKEVQTEKK) the chain is on the cytoplasmic side. Residues 273-297 (ATVLVLAVLGLFVLCWFPFQISTFL) form a helical membrane-spanning segment. Over 298–316 (DTLLRLGVLSGCWNERAVD) the chain is Extracellular. A helical transmembrane segment spans residues 317 to 340 (IVTQISSYVAYSNSCLNPLVYVIV). Residues 341–396 (GKRFRKKSREVYQAICRKGGCMGESVQMENSMGTLRTSISVDRQIHKLQDWAGNKQ) lie on the Cytoplasmic side of the membrane. Y352 carries the post-translational modification Phosphotyrosine. A lipid anchor (S-palmitoyl cysteine) is attached at C356. Phosphoserine is present on residues S365 and S371. T374 carries the post-translational modification Phosphothreonine. 2 positions are modified to phosphoserine; by GRK6: S378 and S380.

It belongs to the G-protein coupled receptor 1 family. Bradykinin receptor subfamily. BDKRB2 sub-subfamily. In terms of assembly, forms a complex with PECAM1 and GNAQ. Interacts with PECAM1. Post-translationally, diphosphorylation at Ser-365 and Ser-371, at Ser-378 and Ser-380, and at Thr-374 and Ser-380 seem to be correlated pairwise. In terms of processing, palmitoylation at Cys-356 and phosphorylation at Tyr-352 seem to be mutually exclusive. Uterus, vas deferens, kidney, ileum, heart, testis, lung and brain.

It is found in the cell membrane. Its function is as follows. Receptor for bradykinin. It is associated with G proteins that activate a phosphatidylinositol-calcium second messenger system. In Rattus norvegicus (Rat), this protein is B2 bradykinin receptor (Bdkrb2).